Reading from the N-terminus, the 413-residue chain is Na(+)-translocating NADH-quinone reductase subunit B (413 aa).

3 helical membrane passes run 55–75 (IMIM…YNAG), 128–148 (FLPI…LFCM), and 163–183 (ILFA…LGIT). Threonine 235 carries the post-translational modification FMN phosphoryl threonine. 5 consecutive transmembrane segments (helical) span residues 267 to 287 (IPGS…AMIV), 296 to 316 (IIAG…VIGS), 324 to 344 (MPWH…FMAT), 357 to 377 (WWYG…NPAY), and 380 to 400 (GMML…HVVI).

It belongs to the NqrB/RnfD family. In terms of assembly, composed of six subunits; NqrA, NqrB, NqrC, NqrD, NqrE and NqrF. Requires FMN as cofactor.

The protein localises to the cell inner membrane. The catalysed reaction is a ubiquinone + n Na(+)(in) + NADH + H(+) = a ubiquinol + n Na(+)(out) + NAD(+). In terms of biological role, NQR complex catalyzes the reduction of ubiquinone-1 to ubiquinol by two successive reactions, coupled with the transport of Na(+) ions from the cytoplasm to the periplasm. NqrA to NqrE are probably involved in the second step, the conversion of ubisemiquinone to ubiquinol. The sequence is that of Na(+)-translocating NADH-quinone reductase subunit B from Vibrio campbellii (strain ATCC BAA-1116).